A 275-amino-acid polypeptide reads, in one-letter code: Large ribosomal subunit protein uL2c (275 aa).

A disordered region spans residues 224–263; sequence VMNPVDHPHGGGEGRAPIGRKRPLTPWGRPALGKKSRKNH.

This sequence belongs to the universal ribosomal protein uL2 family. As to quaternary structure, part of the 50S ribosomal subunit.

It is found in the plastid. The protein localises to the chloroplast. This Chaetosphaeridium globosum (Charophycean green alga) protein is Large ribosomal subunit protein uL2c (rpl2).